Here is a 3477-residue protein sequence, read N- to C-terminus: MANRRVGRGCWEVSPTERRPPAGLRGPATEEEASSPPVLSLSHFCRSPFLCFGDVLLGDSRTVPLALDNPNEEVAEVKISHFPAADLGFSVSQRCFVLQPKDKIVISVDWTPFKEGRVREIMTFLINDVLKHQAILLGNAEKQKKKKRSLWDTIKKKKISASTSHNRRVSNIQNVNKTFSVSQKVNRVRSPLQACENLAVNEGGLPTENNSLTLEENKIPVSPISPAFNECHGATCLPLSVRRSTTYSSLHASENRELLNVDNTNVSKVSFNEKAVAETTFNSMNVSGQSGENSKLILTPNYSSTLNVTQSQINFLSPDSFVNNSHGANNELELVTCLSSDMFMTDNSKPVHLQSTTAHEIYQKILSPDSFIKDNYGLNQDLESESVNLILSPNQFLKDNMAYMCTSQQTCKVPLTNENSQVPQSPQDWSKSEVSPCIPECQGSKSPKAIFEELVEMKSDYYSFIKQNNPKFSAVQDISSHSHNKQPKRRPILSATVTKRKPTCTRENQTEINKPKAKRCLNSAVGGHEKVINNQKEKEDFHSYLPVIDPVLSKSKSYKNQIMPSSTTASVARKRKSDESMEDANVRVAVTEHTEVREIKRIHFSPSESKTSAVKKTKNVITPISKCISNREKLNLKKKTDLLIFKTPISKTNRRTKPIIAVAQSNLTFIKPLKTDIPRHPMPFAAKNMFYDERWKEKQEQGFTWWLNFILTPDDFTVKTNISEVNAATLLLGVENQHKISVPRAPTKEEMSLRAYTARCRLNRLRRAACRLFTSEKMVKAIKKLEIEIEARRLIVRKDRHLWKDVGERQKVLNWLLSYNPLWLRIGLETIYGELISLEDNSDVTGLAMFILNRLLWNPDIAAEYRHPTVPHLYRDGHEGALSKFTLKKLLLLVCFLDYAKISKLIDHDPCLFCKDAEFKASKEILLAFSRDFLSGEGDLSRHLGLLGLPVNHVQTPFDEFDFAITNLAVDLQCGVRLVRTMELLTQNWSLSKKLRIPAISRLQKMHNVDIVLQVLKSRGIELSDEHGNTILSKDIVDRHREKTLRLLWKIAFAFQVDISLNLDQLKEEIAFLKHTQSIKRTISLLSCHSDALINKKKGKRDSGSFEQYSENIKLLMDWVNAVCAFYNKKVENFTVSFSDGRVLCYLIHHYHPCYVPFDAICQRTTQTVECTQTGSVVLNSSSESDDSSLDMSLKAFDHENTSELYKELLENEKKNFHLVRSAVRDLGGIPAMINHSDMSNTIPDEKVVITYLSFLCARLLDLRKEIRAARLIQTTWRKYKLKTDLKRHQERDKAARIIQSAVINFLAKQRLRKRVNAALIIQKYWRRVLAQRKLLILKKEKLEKVQNKAASLIQGYWRRYSTRKRFLKLKYYSIILQSRIRMIIAVTSYKRYLWATVTIQRHWRAYLRRKQDQQRYEMLKSSSLIIQSMFRKWKQRKMQSQVKATVILQRAFREWHLRKRAKEENSAIVIQSWYRMHKELRKYIYIRSCVIVIQKRFRCFQAQKLYKRKKESILTIQKYYKAYLKGKIERTNYLQKRAAAIQLQAAFRRLKAHNLCRQIRAACVIQSYWRMRQDRVRFLNLKKTIIKFQAHIRKHQQLQKYKKMKKAAVIIQTHFRAYIFARKVLASYQKTRSAVIVLQSAYRGMQARKMYIHILTSVIKIQSYYRAYVSKKEFLSLKNATIKLQSIVKMKQTRKQYLHLRAAALFIQQCYRSKKIATQKREEYMQMRESCIKLQAFVRGYLVRKQMRLQRKAVISLQSYFRMRKARQYYLKMYKAIIVIQNYYHAYKAQVNQRKKFLRVKKAATCLQAAYRGYKIRQLIKQQSIAAVKIQSAFRGYNKRVKYQSVLQSIIKIQRWYRAYKTLHDTRTHFLKTKAAVVSLQSAYRGWKVRKQIRREHQAALKIQSAFRMAKAQKQFRLFKTAALVIQQNFRAWTAGRKQRMEYIELRHAVLILQSMWKGKTLRRQLQRQHKCAIIIQSYYRMHVQQKKWKIMKKAALLIQKYYKAYSIGREQHHLYLKTKAAVVTLQSAYRGMKVRKRIKDCNKAAVTIQSKYRAYKTKKKYATYRASAIIIQRWYRGIKITHRQHKEYLNLKKTAIKIQSVYRGIRVRRHIQHMHRAATYIKAMFKMHQSRISYHTMRKAAIVIQVRFRAYYQGKMQREKYLTILKAVKILQASFRGVRVRWTLRKMQIAATLIQSNYRRYKQQTYFNKLKKITKTIQQRYRAVKERNIQFQRYNKLRHSVIYIQAIFRGKKARRHLKMMHVAATLIQRRFRTLMMRRRFLSLKKTAVWIQRKYRAHLCTKHHLQFLQVQNAVIKIQSSYRRWMIRKKMREMHRAATFIQATFRMQRVHMRYQALKQASVVIQQQYQANRAAKLQRQHYLRQRHSAVILQAAFRGMKTRRHLKSMHSSATLIQSRFRSLLVRRRFISLKKATIFVQRKYRATICAKHKLHQFLQLRKAAITVQSSYRRLMVKKKLQEMQRAAVLIQATFRMHRTYVTFQTWKQASILIQQHYRTYRAAKLQKENYIRQWHSAVVIQAAYKGMKARQHLREKHKAAIIIQSTYRMHRQYCFYQKLQWATKIIQEKYRANKKKQKALQHNELKKETCVQASFQDMNMQKQIQEQHQAAIIIQKHCKAFKIRKHYLHLRATVVSIQRRYRKLTVVRTQAVICIQSYYRGFKVRRDIQNMHRAATLIQSFYRMHRAKVDYQTKKTAIVVIQNYYRLYIRVKTERKIFLAVQKSVRTIQAAFRGMKVRQKLKNISEEKMAAIVNQSALCCYRSKTQYEAVQSEGVTIQEWYKASGLACSQEAEYHSQSRAAVTIQKAFRRMVTRKVETQKCAALRIQFFLQMAVYRRRFVQQKRAAITLQHYFRTWQTRKQFLLYRKAAVVLQNHYRAFLSAKHQRQVYLQIRSSVIIIQARSKGFIQKRKFQEIKNSTIKIQAMWRRYRAKKYLCKVKAACKIQAWYRCWRAHKEYLAILKAVKIIQGGFYTKLERTWFLNVRASAIIIQRKWRAILSAKIAHEHFLMIKRHRAACLIQAHYRGYKERQVFLRQKSAALIIQKYIRAREAGKRERIKYIEFKKSTVILQALVRGWLVRKRILEQRTKIRLLHFTAAAYYHLNALRIQRAYKLYLAVKNANKQVNSVICIQRWFRARLQQKKFIQKYYSIEKIEHEGQECLSQRNRAASVIQKAVRHFVLRKKQEKFTSGIIKIQALWRGYSWRKKNDCTKIKAIRLSLQVVNREIREENKLYKRTALALHYLLTYKHLSAILEALKHLEVVTRLSPLCCENMAQSGAISKIFVLIRSCNRSVPCMEVIRYAVQVLLNVSKYEKTTSAVYDVENCVDTLLELLQIYREKPGNKVADKGGSIFTKTCCLLAILLKTTNRASDVRSRSKVVDRIYSLYKLTAHKHKMNTERILHKQKKNSSISIPFIPETPVRTRIVSRLKPDWVLRRDNMEEITNPLQAIQMVMDTLGIPY.

The segment at 1 to 34 is disordered; that stretch reads MANRRVGRGCWEVSPTERRPPAGLRGPATEEEAS. S283, S367, S392, and S425 each carry phosphoserine. Residues 417–433 are compositionally biased toward polar residues; that stretch reads NENSQVPQSPQDWSKSE. 2 disordered regions span residues 417-436 and 563-583; these read NENS…EVSP and MPSS…SMED. Residue S605 is modified to Phosphoserine. The 137-residue stretch at 920–1056 folds into the Calponin-homology (CH) 1 domain; it reads KASKEILLAF…LLWKIAFAFQ (137 aa). The stretch at 1057 to 1076 forms a coiled coil; that stretch reads VDISLNLDQLKEEIAFLKHT. S1103 is subject to Phosphoserine. The 152-residue stretch at 1110–1261 folds into the Calponin-homology (CH) 2 domain; that stretch reads SENIKLLMDW…YLSFLCARLL (152 aa). IQ domains are found at residues 1347-1378, 1393-1422, 1582-1613, 1605-1634, 1632-1661, 1655-1684, 1728-1757, 1751-1782, 1801-1830, 1824-1853, 1874-1903, 1897-1928, 1947-1978, 1970-2001, 2020-2049, 2043-2074, 2093-2124, 2116-2147, 2239-2270, 2262-2293, 2311-2342, 2334-2365, 2384-2415, 2407-2438, 2457-2488, 2480-2511, 2530-2561, 2624-2653, 2665-2696, 2688-2719, 2738-2767, 2814-2845, 2859-2890, 2909-2938, 2932-2963, 2954-2985, 3029-3060, 3079-3110, and 3204-3235; these read QNKA…IILQ, YLWA…MLKS, LKKT…VIIQ, MKKA…KTRS, TRSA…SVIK, ILTS…ATIK, MRES…AVIS, QRKA…IVIQ, VKKA…AAVK, QSIA…SIIK, TKAA…AALK, EHQA…LVIQ, LRHA…IIIQ, QHKC…LLIQ, TKAA…AAVT, CNKA…IIIQ, LKKT…TYIK, MHRA…IVIQ, LRHS…TLIQ, MHVA…VWIQ, VQNA…TFIQ, MHRA…VVIQ, QRHS…TLIQ, MHSS…IFVQ, LRKA…VLIQ, MQRA…ILIQ, QWHS…IIIQ, QHQA…TVVS, RTQA…TLIQ, VQKS…EKMA, QSRA…RIQF, QKRA…VVLQ, IRSS…STIK, IKNS…KIQA, KVKA…KIIQ, RHRA…LIIQ, FKKS…RLLH, and FTSG…IRLS.

The protein localises to the cytoplasm. Its subcellular location is the cytoskeleton. It localises to the spindle. The protein resides in the nucleus. Its function is as follows. Probable role in mitotic spindle regulation and coordination of mitotic processes. May have a preferential role in regulating neurogenesis. This is Abnormal spindle-like microcephaly-associated protein homolog (ASPM) from Colobus guereza (Mantled guereza).